The primary structure comprises 327 residues: Malate dehydrogenase (327 aa).

12-18 (GAAGQIA) contributes to the NAD(+) binding site. 2 residues coordinate substrate: Arg-93 and Arg-99. NAD(+)-binding positions include Asn-106, Gln-113, and 130–132 (VGN). The substrate site is built by Asn-132 and Arg-163. The Proton acceptor role is filled by His-188.

It belongs to the LDH/MDH superfamily. MDH type 2 family.

It catalyses the reaction (S)-malate + NAD(+) = oxaloacetate + NADH + H(+). Functionally, catalyzes the reversible oxidation of malate to oxaloacetate. This Acidiphilium cryptum (strain JF-5) protein is Malate dehydrogenase.